Here is a 396-residue protein sequence, read N- to C-terminus: Imidazolonepropionase (396 aa).

Residues H69 and H71 each contribute to the Fe(3+) site. Positions 69 and 71 each coordinate Zn(2+). Positions 78, 136, and 163 each coordinate 4-imidazolone-5-propanoate. Y136 contacts N-formimidoyl-L-glutamate. H224 contacts Fe(3+). Residue H224 coordinates Zn(2+). Q227 serves as a coordination point for 4-imidazolone-5-propanoate. D298 serves as a coordination point for Fe(3+). D298 lines the Zn(2+) pocket. Residues N300 and G302 each coordinate N-formimidoyl-L-glutamate. Residue T303 coordinates 4-imidazolone-5-propanoate.

This sequence belongs to the metallo-dependent hydrolases superfamily. HutI family. The cofactor is Zn(2+). Requires Fe(3+) as cofactor.

The protein resides in the cytoplasm. It carries out the reaction 4-imidazolone-5-propanoate + H2O = N-formimidoyl-L-glutamate. It participates in amino-acid degradation; L-histidine degradation into L-glutamate; N-formimidoyl-L-glutamate from L-histidine: step 3/3. Functionally, catalyzes the hydrolytic cleavage of the carbon-nitrogen bond in imidazolone-5-propanoate to yield N-formimidoyl-L-glutamate. It is the third step in the universal histidine degradation pathway. This chain is Imidazolonepropionase, found in Cutibacterium acnes (strain DSM 16379 / KPA171202) (Propionibacterium acnes).